Consider the following 331-residue polypeptide: Glycerophosphodiester phosphodiesterase 1 (331 aa).

The Cytoplasmic segment spans residues Met1–Leu3. Residues Trp4 to Val24 form a helical membrane-spanning segment. Residues Thr25 to Ser248 lie on the Lumenal side of the membrane. In terms of domain architecture, GP-PDE spans Val65–Phe331. Mg(2+)-binding residues include Glu97 and Asp99. The N-linked (GlcNAc...) asparagine glycan is linked to Asn168. Residue Asp174 participates in Mg(2+) binding. Residues Val249 to Cys269 form a helical membrane-spanning segment. Topologically, residues Gly270–Phe331 are cytoplasmic.

It belongs to the glycerophosphoryl diester phosphodiesterase family. Interacts with PRAF2. Interacts with RGS16. Mg(2+) serves as cofactor. In terms of processing, N-glycosylated. In terms of tissue distribution, detected in heart, brain, lung, liver, skeletal muscle, kidney, pituitary and testis.

The protein localises to the cell membrane. Its subcellular location is the cytoplasmic vesicle membrane. The enzyme catalyses sn-glycero-3-phospho-1D-myo-inositol + H2O = myo-inositol + sn-glycerol 3-phosphate + H(+). It carries out the reaction 1-O-(1Z-octadecenyl)-sn-glycero-3-phospho-(N-5Z,8Z,11Z,14Z-eicosatetraenoyl)-ethanolamine + H2O = 1-O-(1Z-octadecenyl)-sn-glycero-3-phosphate + N-(5Z,8Z,11Z,14Z-eicosatetraenoyl)-ethanolamine + H(+). It catalyses the reaction 1-O-(1Z-octadecenyl)-sn-glycero-3-phospho-(N-9Z-octadecenoyl)-ethanolamine + H2O = 1-O-(1Z-octadecenyl)-sn-glycero-3-phosphate + N-(9Z-octadecenoyl) ethanolamine + H(+). The catalysed reaction is 1-O-(1Z-octadecenyl)-sn-glycero-3-phospho-N-hexadecanoyl-ethanolamine + H2O = 1-O-(1Z-octadecenyl)-sn-glycero-3-phosphate + N-hexadecanoylethanolamine + H(+). The enzyme catalyses N-(4Z,7Z,10Z,13Z,16Z,19Z)-docosahexaenoyl-sn-glycero-3-phosphoethanolamine + H2O = N-(4Z,7Z,10Z,13Z,16Z,19Z)-docosahexaenoyl ethanolamine + sn-glycerol 3-phosphate + H(+). It carries out the reaction N-eicosanoyl-sn-glycero-3-phosphoethanolamine + H2O = N-eicosanoyl ethanolamine + sn-glycerol 3-phosphate + H(+). It catalyses the reaction N-hexadecanoyl-sn-glycero-3-phosphoethanolamine + H2O = N-hexadecanoylethanolamine + sn-glycerol 3-phosphate + H(+). The catalysed reaction is N-(9Z-octadecenoyl)-sn-glycero-3-phosphoethanolamine + H2O = N-(9Z-octadecenoyl) ethanolamine + sn-glycerol 3-phosphate + H(+). The enzyme catalyses N-(5Z,8Z,11Z,14Z-eicosatetraenoyl)-sn-glycero-3-phosphoethanolamine + H2O = N-(5Z,8Z,11Z,14Z-eicosatetraenoyl)-ethanolamine + sn-glycerol 3-phosphate + H(+). With respect to regulation, inhibited by EDTA, calcium chloride, and zinc chloride. Enhanced by magnesium chloride. Glycerophosphodiester phosphodiesterase activity can be modulated by G-protein signaling pathways. Functionally, hydrolyzes the phosphodiester bond of glycerophosphodiesters such as glycerophosphoinositol (GroPIns) and glycerophosphoethanolamine (GroPEth), to yield a glycerol phosphate and an alcohol. Hydrolyzes glycerophospho-N-acylethanolamines to N-acylethanolamines in the brain and participates in bioactive N-acylethanolamine biosynthesis such as anandamide (an endocannabinoid), N-palmitoylethanolamine (an anti-inflammatory), and N-oleoylethanolamine (an anorexic). In addition, has a lysophospholipase D activity by hydrolyzing N-acyl-lysoplasmenylethanolamine (N-acyl-lysoPlsEt) to N-acylethanolamine. However lysophospholipase D activity is lower than glycerophosphodiester phosphodiesterase activity. Has little or no activity towards glycerophosphocholine. This chain is Glycerophosphodiester phosphodiesterase 1, found in Rattus norvegicus (Rat).